The primary structure comprises 152 residues: Probable flagellum biosynthesis repressor protein FlbT (152 aa).

This sequence belongs to the FlbT family.

In terms of biological role, has a post-transcriptional repressor function in flagellum biogenesis. Associates with the 5'-UTR of fljK mRNA and promotes its degradation. This chain is Probable flagellum biosynthesis repressor protein FlbT, found in Brucella anthropi (strain ATCC 49188 / DSM 6882 / CCUG 24695 / JCM 21032 / LMG 3331 / NBRC 15819 / NCTC 12168 / Alc 37) (Ochrobactrum anthropi).